Reading from the N-terminus, the 764-residue chain is Chloride anion exchanger (764 aa).

Residues 1 to 76 (MIEPFGNQYI…YRLKEWLLSD (76 aa)) are Cytoplasmic-facing. A helical membrane pass occupies residues 77–97 (IVSGISTGIVAVLQGLAFALL). Residues 98-99 (VD) lie on the Extracellular side of the membrane. Residues 100–120 (IPPVYGLYASFFPAIIYLFFG) form a helical membrane-spanning segment. At 121–124 (TSRH) the chain is on the cytoplasmic side. Residues 125 to 145 (ISVGPFPILSMMVGLAVSGAV) traverse the membrane as a helical segment. Residues 146 to 175 (SKAVPDRNATTLGLPNNSNNSSLLDDERVR) are Extracellular-facing. 3 N-linked (GlcNAc...) asparagine glycosylation sites follow: N153, N161, and N165. Residues 176–196 (VAAAASVTVLSGIIQLAFGIL) traverse the membrane as a helical segment. Position 197 (R197) is a topological domain, cytoplasmic. Residues 198–218 (IGFVVIYLSESLISGFTTAAA) form a helical membrane-spanning segment. Over 219–257 (VHVLVSQLKFIFQLTVPSHTDPVSIFKVLYSVFSQIEKT) the chain is Extracellular. The chain crosses the membrane as a helical span at residues 258 to 278 (NIADLVTALIVLLVVSIVKEI). Topologically, residues 279–342 (NQRFKDKLPV…VETFQNTVGD (64 aa)) are cytoplasmic. Residues 343–363 (CFGIAMVAFAVAFSVASVYSL) traverse the membrane as a helical segment. The Extracellular segment spans residues 364 to 374 (KYDYPLDGNQE). The helical transmembrane segment at 375–395 (LIALGLGNIVCGVFRGFAGST) threads the bilayer. The Cytoplasmic segment spans residues 396–411 (ALSRSAVQESTGGKTQ). Residues 412-432 (IAGLIGAIIVLIVVLAIGFLL) form a helical membrane-spanning segment. Residues 433 to 469 (APLQKSVLAALALGNLKGMLMQFAEIGRLWRKDKYDC) are Extracellular-facing. Residues 470–490 (LIWIMTFIFTIVLGLGLGLAA) traverse the membrane as a helical segment. Topologically, residues 491–701 (SVAFQLLTIV…EKLNRYEFFD (211 aa)) are cytoplasmic. The region spanning 525–720 (DYYDMYEPEG…LTIHDAVLHI (196 aa)) is the STAS domain. The short motif at 761-764 (ETKF) is the PDZ-binding element.

Belongs to the SLC26A/SulP transporter (TC 2.A.53) family. In terms of assembly, interacts with CFTR, SLC26A6 and NHERF1. Interacts with PDZK1. Interacts (via PDZ-binding motif) with NHERF4 (via the third PDZ domain); interaction leads to decreased expression of SLC26A3 on the cell membrane resulting in its reduced exchanger activity. In terms of processing, N-glycosylation is required for efficient cell surface expression, and protection from proteolytic degradation. In terms of tissue distribution, expressed in the colon. Expression is significantly decreased in adenomas (polyps) and adenocarcinomas of the colon.

Its subcellular location is the apical cell membrane. The protein localises to the membrane. It localises to the cell membrane. It catalyses the reaction hydrogencarbonate(in) + 2 chloride(out) = hydrogencarbonate(out) + 2 chloride(in). Its activity is regulated as follows. Inhibited by acidic pH. In terms of biological role, mediates chloride-bicarbonate exchange with a chloride bicarbonate stoichiometry of 2:1 in the intestinal epithelia. Plays a role in the chloride and bicarbonate homeostasis during sperm epididymal maturation and capacitation. This chain is Chloride anion exchanger (SLC26A3), found in Homo sapiens (Human).